A 97-amino-acid chain; its full sequence is Anti-sigma-YlaC factor YlaD (97 aa).

3 residues coordinate Zn(2+): His-29, Cys-33, and Cys-36. The helical transmembrane segment at 71–93 threads the bilayer; the sequence is YYGLLIMKAACWFGAAVAMMLII.

The protein belongs to the zinc-associated anti-sigma factor (ZAS) superfamily. The cofactor is Zn(2+).

Its subcellular location is the cell membrane. Anti-sigma factor for YlaC. The chain is Anti-sigma-YlaC factor YlaD (ylaD) from Bacillus subtilis (strain 168).